The chain runs to 489 residues: UDP-N-acetylmuramate--L-alanine ligase (489 aa).

ATP is bound at residue 128-134 (GTHGKTT).

Belongs to the MurCDEF family.

It localises to the cytoplasm. The catalysed reaction is UDP-N-acetyl-alpha-D-muramate + L-alanine + ATP = UDP-N-acetyl-alpha-D-muramoyl-L-alanine + ADP + phosphate + H(+). It functions in the pathway cell wall biogenesis; peptidoglycan biosynthesis. In terms of biological role, cell wall formation. The polypeptide is UDP-N-acetylmuramate--L-alanine ligase (Shewanella pealeana (strain ATCC 700345 / ANG-SQ1)).